Consider the following 319-residue polypeptide: Ribosomal protein L11 methyltransferase (319 aa).

S-adenosyl-L-methionine-binding residues include threonine 165, glycine 186, aspartate 208, and asparagine 251.

Belongs to the methyltransferase superfamily. PrmA family.

The protein localises to the cytoplasm. The catalysed reaction is L-lysyl-[protein] + 3 S-adenosyl-L-methionine = N(6),N(6),N(6)-trimethyl-L-lysyl-[protein] + 3 S-adenosyl-L-homocysteine + 3 H(+). Functionally, methylates ribosomal protein L11. This Limosilactobacillus reuteri subsp. reuteri (strain JCM 1112) (Lactobacillus reuteri) protein is Ribosomal protein L11 methyltransferase.